Here is a 180-residue protein sequence, read N- to C-terminus: KxDL motif-containing protein 1 (180 aa).

Composition is skewed to polar residues over residues 126–144 and 158–170; these read TTIATSEQSTESCDTSPSI and QAPSDTPSVNGQI. The interval 126-180 is disordered; it reads TTIATSEQSTESCDTSPSIISPAMSQDFEDLSQAPSDTPSVNGQILTDEEVVHED.

It belongs to the KXD1 family. In terms of assembly, associates with the BLOC-1 complex.

Its subcellular location is the lysosome membrane. Its function is as follows. As part of a BORC-like complex may play a role in lysosomes movement and localization at the cell periphery. Associated with the cytosolic face of lysosomes, this complex may couple lysosomes to microtubule plus-end-directed kinesin motor. May also be involved in the biogenesis of lysosome-related organelles such as melanosomes. The protein is KxDL motif-containing protein 1 (kxd1) of Xenopus tropicalis (Western clawed frog).